We begin with the raw amino-acid sequence, 461 residues long: Phosphoglucosamine mutase (461 aa).

The Phosphoserine intermediate role is filled by Ser-118. The Mg(2+) site is built by Ser-118, Asp-255, Asp-257, and Asp-259. Ser-118 is subject to Phosphoserine.

It belongs to the phosphohexose mutase family. Mg(2+) is required as a cofactor. Activated by phosphorylation.

It catalyses the reaction alpha-D-glucosamine 1-phosphate = D-glucosamine 6-phosphate. Catalyzes the conversion of glucosamine-6-phosphate to glucosamine-1-phosphate. The polypeptide is Phosphoglucosamine mutase (Acidothermus cellulolyticus (strain ATCC 43068 / DSM 8971 / 11B)).